A 246-amino-acid chain; its full sequence is 1-(5-phosphoribosyl)-5-[(5-phosphoribosylamino)methylideneamino] imidazole-4-carboxamide isomerase (246 aa).

Catalysis depends on Asp-8, which acts as the Proton acceptor. Asp-129 serves as the catalytic Proton donor.

It belongs to the HisA/HisF family.

The protein resides in the cytoplasm. The catalysed reaction is 1-(5-phospho-beta-D-ribosyl)-5-[(5-phospho-beta-D-ribosylamino)methylideneamino]imidazole-4-carboxamide = 5-[(5-phospho-1-deoxy-D-ribulos-1-ylimino)methylamino]-1-(5-phospho-beta-D-ribosyl)imidazole-4-carboxamide. Its pathway is amino-acid biosynthesis; L-histidine biosynthesis; L-histidine from 5-phospho-alpha-D-ribose 1-diphosphate: step 4/9. In Desulforamulus reducens (strain ATCC BAA-1160 / DSM 100696 / MI-1) (Desulfotomaculum reducens), this protein is 1-(5-phosphoribosyl)-5-[(5-phosphoribosylamino)methylideneamino] imidazole-4-carboxamide isomerase.